Consider the following 355-residue polypeptide: Elongation factor Ts (355 aa).

Residues 82–85 (TDFV) are involved in Mg(2+) ion dislocation from EF-Tu.

This sequence belongs to the EF-Ts family.

It localises to the cytoplasm. Functionally, associates with the EF-Tu.GDP complex and induces the exchange of GDP to GTP. It remains bound to the aminoacyl-tRNA.EF-Tu.GTP complex up to the GTP hydrolysis stage on the ribosome. The chain is Elongation factor Ts from Helicobacter pylori (strain P12).